The primary structure comprises 454 residues: Glutamyl-tRNA reductase (454 aa).

Residues 49 to 52, serine 109, 114 to 116, and glutamine 120 each bind substrate; these read TCNR and ETQ. Cysteine 50 (nucleophile) is an active-site residue. 189-194 is an NADP(+) binding site; sequence GAGKMS. Over residues 432 to 442 the composition is skewed to basic and acidic residues; sequence DHAEQSWKEGQ. The interval 432 to 454 is disordered; sequence DHAEQSWKEGQRPSLNQGMALRT.

This sequence belongs to the glutamyl-tRNA reductase family. In terms of assembly, homodimer.

It catalyses the reaction (S)-4-amino-5-oxopentanoate + tRNA(Glu) + NADP(+) = L-glutamyl-tRNA(Glu) + NADPH + H(+). It participates in porphyrin-containing compound metabolism; protoporphyrin-IX biosynthesis; 5-aminolevulinate from L-glutamyl-tRNA(Glu): step 1/2. Catalyzes the NADPH-dependent reduction of glutamyl-tRNA(Glu) to glutamate 1-semialdehyde (GSA). The chain is Glutamyl-tRNA reductase from Shouchella clausii (strain KSM-K16) (Alkalihalobacillus clausii).